We begin with the raw amino-acid sequence, 149 residues long: Transcriptional repressor NrdR (149 aa).

The segment at 3–34 (CPFCSATDTKVIDSRLVADGHQVRRRRECTLC) is a zinc-finger region. One can recognise an ATP-cone domain in the interval 49–139 (PRVIKRDDTR…VYRAFEDVSQ (91 aa)).

The protein belongs to the NrdR family. Requires Zn(2+) as cofactor.

Negatively regulates transcription of bacterial ribonucleotide reductase nrd genes and operons by binding to NrdR-boxes. This is Transcriptional repressor NrdR from Shewanella denitrificans (strain OS217 / ATCC BAA-1090 / DSM 15013).